The primary structure comprises 308 residues: Staphylococcal superantigen-like 4 (308 aa).

Positions methionine 1–alanine 30 are cleaved as a signal peptide. The interval alanine 28–asparagine 117 is disordered. Polar residues-rich tracts occupy residues proline 33 to serine 47 and serine 55 to alanine 76. Over residues threonine 77–proline 93 the composition is skewed to low complexity. A compositionally biased stretch (polar residues) spans glutamine 94–threonine 114. The sialyl Lewis X-binding stretch occupies residues valine 180 to tyrosine 278.

Belongs to the staphylococcal/streptococcal toxin family.

The protein resides in the secreted. Its function is as follows. Secreted protein that plays a role in immune innate response inhibition by interfering with host TLR2-mediated pathway. This chain is Staphylococcal superantigen-like 4, found in Staphylococcus aureus (strain Newman).